The sequence spans 442 residues: G-protein coupled receptor family C group 5 member C (442 aa).

A signal peptide spans 1–23; sequence MAIHRTVLMCLGLPLFLLPGARA. Residues 24 to 50 are Extracellular-facing; sequence QEQAPPGCSPDLNPLYYNLCDRSEAWG. Residues 51 to 71 form a helical membrane-spanning segment; that stretch reads IILEAVAGAGVVTTFVLTIIL. At 72 to 85 the chain is on the cytoplasmic side; sequence VASLPFVQDTKKRS. Residues 86 to 106 traverse the membrane as a helical segment; sequence LLGTQVFFLLGTLGLFCLVFA. Over 107-120 the chain is Extracellular; the sequence is CVVKPSFSTCASRR. Residues 121–141 traverse the membrane as a helical segment; that stretch reads FLFGVLFAICFSCLVAHVLAL. The Cytoplasmic portion of the chain corresponds to 142–155; that stretch reads HFLVRKNHGPRGWV. Residues 156-176 form a helical membrane-spanning segment; it reads IFLVALLLSLVEVIINTEWLI. Over 177 to 209 the chain is Extracellular; sequence ITLVRGAGTEGDALGNGSAGWVAVSPCAIANAD. The N-linked (GlcNAc...) asparagine glycan is linked to N192. A helical membrane pass occupies residues 210–230; that stretch reads FVMALIYVMLLLLCAFSGAWS. At 231-242 the chain is on the cytoplasmic side; sequence ALCGRFKRWRKH. Residues 243–263 traverse the membrane as a helical segment; sequence GVFILLTTTASIAVWVVWIVM. The Extracellular portion of the chain corresponds to 264 to 280; sequence YTYGNRQHNSPTWDDPT. The helical transmembrane segment at 281-301 threads the bilayer; that stretch reads LAIALATNAWAFVLFYVIPEV. Residues 302-442 lie on the Cytoplasmic side of the membrane; that stretch reads SQVTRSSPEQ…QVFRNPYVWD (141 aa). S345, S384, S404, and S407 each carry phosphoserine. Y415 carries the post-translational modification Phosphotyrosine. T424 is modified (phosphothreonine).

The protein belongs to the G-protein coupled receptor 3 family.

It localises to the cell membrane. Functionally, this retinoic acid-inducible G-protein coupled receptor provide evidence for a possible interaction between retinoid and G-protein signaling pathways. This Bos taurus (Bovine) protein is G-protein coupled receptor family C group 5 member C (GPRC5C).